The chain runs to 77 residues: Exodeoxyribonuclease 7 small subunit (77 aa).

The protein belongs to the XseB family. As to quaternary structure, heterooligomer composed of large and small subunits.

Its subcellular location is the cytoplasm. It carries out the reaction Exonucleolytic cleavage in either 5'- to 3'- or 3'- to 5'-direction to yield nucleoside 5'-phosphates.. Its function is as follows. Bidirectionally degrades single-stranded DNA into large acid-insoluble oligonucleotides, which are then degraded further into small acid-soluble oligonucleotides. This is Exodeoxyribonuclease 7 small subunit from Carboxydothermus hydrogenoformans (strain ATCC BAA-161 / DSM 6008 / Z-2901).